A 261-amino-acid polypeptide reads, in one-letter code: 5'-nucleotidase SurE (261 aa).

Residues aspartate 8, aspartate 9, serine 39, and asparagine 94 each coordinate a divalent metal cation.

Belongs to the SurE nucleotidase family. A divalent metal cation is required as a cofactor.

The protein localises to the cytoplasm. The catalysed reaction is a ribonucleoside 5'-phosphate + H2O = a ribonucleoside + phosphate. Its function is as follows. Nucleotidase that shows phosphatase activity on nucleoside 5'-monophosphates. The sequence is that of 5'-nucleotidase SurE from Methanopyrus kandleri (strain AV19 / DSM 6324 / JCM 9639 / NBRC 100938).